The chain runs to 234 residues: Peroxiredoxin-2E, chloroplastic (234 aa).

The N-terminal 70 residues, M1–T70, are a transit peptide targeting the chloroplast. Positions I73–L234 constitute a Thioredoxin domain. S82 bears the Phosphoserine mark. The active-site Cysteine sulfenic acid (-SOH) intermediate is the C121.

The protein belongs to the peroxiredoxin family. Prx5 subfamily. In terms of assembly, monomer. As to expression, expressed in all tissues but predominantly in buds, siliques and seeds.

Its subcellular location is the plastid. The protein resides in the chloroplast stroma. The enzyme catalyses [glutaredoxin]-dithiol + a hydroperoxide = [glutaredoxin]-disulfide + an alcohol + H2O. Its function is as follows. Thiol-specific peroxidase that catalyzes the reduction of hydrogen peroxide and organic hydroperoxides to water and alcohols, respectively. Plays a role in cell protection against oxidative stress by detoxifying peroxides. May be involved in chloroplast redox homeostasis. The chain is Peroxiredoxin-2E, chloroplastic (PRXIIE) from Arabidopsis thaliana (Mouse-ear cress).